The primary structure comprises 175 residues: ATP synthase subunit b, chloroplastic (175 aa).

A helical membrane pass occupies residues 24–46 (VLNLAVVLAIVLTYVGDALRGLL).

It belongs to the ATPase B chain family. In terms of assembly, F-type ATPases have 2 components, F(1) - the catalytic core - and F(0) - the membrane proton channel. F(1) has five subunits: alpha(3), beta(3), gamma(1), delta(1), epsilon(1). F(0) has four main subunits: a(1), b(1), b'(1) and c(10-14). The alpha and beta chains form an alternating ring which encloses part of the gamma chain. F(1) is attached to F(0) by a central stalk formed by the gamma and epsilon chains, while a peripheral stalk is formed by the delta, b and b' chains.

It localises to the plastid. The protein resides in the chloroplast thylakoid membrane. F(1)F(0) ATP synthase produces ATP from ADP in the presence of a proton or sodium gradient. F-type ATPases consist of two structural domains, F(1) containing the extramembraneous catalytic core and F(0) containing the membrane proton channel, linked together by a central stalk and a peripheral stalk. During catalysis, ATP synthesis in the catalytic domain of F(1) is coupled via a rotary mechanism of the central stalk subunits to proton translocation. Functionally, component of the F(0) channel, it forms part of the peripheral stalk, linking F(1) to F(0). This is ATP synthase subunit b, chloroplastic from Chlorella vulgaris (Green alga).